The following is a 378-amino-acid chain: Protein RecA (378 aa).

Residue 79-86 coordinates ATP; it reads GPESSGKT.

It belongs to the RecA family.

The protein resides in the cytoplasm. In terms of biological role, can catalyze the hydrolysis of ATP in the presence of single-stranded DNA, the ATP-dependent uptake of single-stranded DNA by duplex DNA, and the ATP-dependent hybridization of homologous single-stranded DNAs. It interacts with LexA causing its activation and leading to its autocatalytic cleavage. This Streptococcus pyogenes serotype M1 protein is Protein RecA.